The primary structure comprises 419 residues: Diaminopimelate decarboxylase (419 aa).

Position 56 is an N6-(pyridoxal phosphate)lysine (lysine 56). Residues glycine 234 and 274–277 (EPGR) contribute to the pyridoxal 5'-phosphate site. Positions 277, 312, and 316 each coordinate substrate. Cysteine 343 functions as the Proton donor in the catalytic mechanism. 2 residues coordinate substrate: glutamate 344 and tyrosine 372. Tyrosine 372 is a binding site for pyridoxal 5'-phosphate.

This sequence belongs to the Orn/Lys/Arg decarboxylase class-II family. LysA subfamily. Homodimer. Pyridoxal 5'-phosphate serves as cofactor.

The catalysed reaction is meso-2,6-diaminopimelate + H(+) = L-lysine + CO2. It participates in amino-acid biosynthesis; L-lysine biosynthesis via DAP pathway; L-lysine from DL-2,6-diaminopimelate: step 1/1. In terms of biological role, specifically catalyzes the decarboxylation of meso-diaminopimelate (meso-DAP) to L-lysine. The chain is Diaminopimelate decarboxylase from Archaeoglobus fulgidus (strain ATCC 49558 / DSM 4304 / JCM 9628 / NBRC 100126 / VC-16).